The chain runs to 261 residues: Undecaprenyl-diphosphatase (261 aa).

7 consecutive transmembrane segments (helical) span residues 38-58 (RSDF…TFVF), 75-95 (RDYV…GLAV), 106-126 (IQPI…AESV), 136-156 (VTWS…VFPG), 181-201 (FSFL…CFEL), 217-237 (VAFV…LGYI), and 241-261 (SFAP…TWLT).

The protein belongs to the UppP family.

It is found in the cell inner membrane. The catalysed reaction is di-trans,octa-cis-undecaprenyl diphosphate + H2O = di-trans,octa-cis-undecaprenyl phosphate + phosphate + H(+). Catalyzes the dephosphorylation of undecaprenyl diphosphate (UPP). Confers resistance to bacitracin. In Xylella fastidiosa (strain 9a5c), this protein is Undecaprenyl-diphosphatase.